A 197-amino-acid chain; its full sequence is Imidazoleglycerol-phosphate dehydratase (197 aa).

This sequence belongs to the imidazoleglycerol-phosphate dehydratase family.

It is found in the cytoplasm. It carries out the reaction D-erythro-1-(imidazol-4-yl)glycerol 3-phosphate = 3-(imidazol-4-yl)-2-oxopropyl phosphate + H2O. It functions in the pathway amino-acid biosynthesis; L-histidine biosynthesis; L-histidine from 5-phospho-alpha-D-ribose 1-diphosphate: step 6/9. The sequence is that of Imidazoleglycerol-phosphate dehydratase from Syntrophomonas wolfei subsp. wolfei (strain DSM 2245B / Goettingen).